Consider the following 137-residue polypeptide: Putative pre-16S rRNA nuclease (137 aa).

The protein belongs to the YqgF nuclease family.

Its subcellular location is the cytoplasm. Could be a nuclease involved in processing of the 5'-end of pre-16S rRNA. This chain is Putative pre-16S rRNA nuclease, found in Oceanobacillus iheyensis (strain DSM 14371 / CIP 107618 / JCM 11309 / KCTC 3954 / HTE831).